A 274-amino-acid chain; its full sequence is MAIVKCKPTSPGRRHVVKVVNPELHKGKPYAPLLEKLSKSGGRNNNGRITTRHIGGGHKQHYRLVDFKRNKDGIPAVVERLEYDPNRSANIALVLYKDGERRYILAPKGLKAGDQIQSGVDAAIKAGNTLPMRNIPVGSTVHNVEMKPGKGGQLARSAGAYVQIVARDGSYVTLRLRSGEMRKVLADCRATLGEVGNAEHMLRVLGKAGASRWRGIRPTVRGTAMNPVDHPHGGGEGRNFGKHPVTPWGVQTKGKKTRSNKRTDKFIVRRRSKK.

The disordered stretch occupies residues 221–274; that stretch reads RGTAMNPVDHPHGGGEGRNFGKHPVTPWGVQTKGKKTRSNKRTDKFIVRRRSKK.

It belongs to the universal ribosomal protein uL2 family. In terms of assembly, part of the 50S ribosomal subunit. Forms a bridge to the 30S subunit in the 70S ribosome.

One of the primary rRNA binding proteins. Required for association of the 30S and 50S subunits to form the 70S ribosome, for tRNA binding and peptide bond formation. It has been suggested to have peptidyltransferase activity; this is somewhat controversial. Makes several contacts with the 16S rRNA in the 70S ribosome. The sequence is that of Large ribosomal subunit protein uL2 from Yersinia enterocolitica.